The primary structure comprises 348 residues: Fe-S cluster assembly protein DRE2 (348 aa).

The tract at residues 1 to 185 is N-terminal SAM-like domain; it reads MSGEKSSLLL…KKPESPRASV (185 aa). Disordered stretches follow at residues 128–148 and 162–213; these read QTAPVALRPKRNTPSGGSKSL and KKAE…TASK. The linker stretch occupies residues 186–241; it reads VAEDLDDGDELDGMNEDDSNSDELTASKSKFFDDVAGQDSADSIDEDDLVDDAEKS. Over residues 188-206 the composition is skewed to acidic residues; the sequence is EDLDDGDELDGMNEDDSNS. Residues Cys-248, Cys-259, Cys-262, and Cys-264 each coordinate [2Fe-2S] cluster. Positions 248–264 are fe-S binding site A; that stretch reads CGKTKTRRRKACKDCTC. Positions 311, 314, 322, and 325 each coordinate [4Fe-4S] cluster. 2 consecutive short sequence motifs (cx2C motif) follow at residues 311 to 314 and 322 to 325; these read CGSC and CSGC. Residues 311-325 are fe-S binding site B; sequence CGSCSLGDAFRCSGC.

This sequence belongs to the anamorsin family. As to quaternary structure, monomer. Interacts with TAH18. Interacts with MIA40. The cofactor is [2Fe-2S] cluster. Requires [4Fe-4S] cluster as cofactor.

It is found in the cytoplasm. It localises to the mitochondrion intermembrane space. Component of the cytosolic iron-sulfur (Fe-S) protein assembly (CIA) machinery required for the maturation of extramitochondrial Fe-S proteins. Part of an electron transfer chain functioning in an early step of cytosolic Fe-S biogenesis, facilitating the de novo assembly of a [4Fe-4S] cluster on the scaffold complex CFD1-NBP35. Electrons are transferred to DRE2 from NADPH via the FAD- and FMN-containing protein TAH18. TAH18-DRE2 are also required for the assembly of the diferric tyrosyl radical cofactor of ribonucleotide reductase (RNR), probably by providing electrons for reduction during radical cofactor maturation in the catalytic small subunit RNR2. This Lachancea thermotolerans (strain ATCC 56472 / CBS 6340 / NRRL Y-8284) (Yeast) protein is Fe-S cluster assembly protein DRE2.